The chain runs to 230 residues: Uracil phosphoribosyltransferase (230 aa).

Residue 38–42 (KGLVK) coordinates GTP. 5-phospho-alpha-D-ribose 1-diphosphate-binding positions include Arg87, Arg112, and 140-148 (DPMIATGST). Uracil is bound by residues Ile204 and 209-211 (GDA). Asp210 serves as a coordination point for 5-phospho-alpha-D-ribose 1-diphosphate.

This sequence belongs to the UPRTase family. Mg(2+) serves as cofactor.

It catalyses the reaction UMP + diphosphate = 5-phospho-alpha-D-ribose 1-diphosphate + uracil. The protein operates within pyrimidine metabolism; UMP biosynthesis via salvage pathway; UMP from uracil: step 1/1. Allosterically activated by GTP. Its function is as follows. Catalyzes the conversion of uracil and 5-phospho-alpha-D-ribose 1-diphosphate (PRPP) to UMP and diphosphate. The polypeptide is Uracil phosphoribosyltransferase (Thermococcus kodakarensis (strain ATCC BAA-918 / JCM 12380 / KOD1) (Pyrococcus kodakaraensis (strain KOD1))).